We begin with the raw amino-acid sequence, 236 residues long: Putative N-acetylmannosamine-6-phosphate 2-epimerase (236 aa).

Belongs to the NanE family.

The enzyme catalyses an N-acyl-D-glucosamine 6-phosphate = an N-acyl-D-mannosamine 6-phosphate. Its pathway is amino-sugar metabolism; N-acetylneuraminate degradation; D-fructose 6-phosphate from N-acetylneuraminate: step 3/5. In terms of biological role, converts N-acetylmannosamine-6-phosphate (ManNAc-6-P) to N-acetylglucosamine-6-phosphate (GlcNAc-6-P). The chain is Putative N-acetylmannosamine-6-phosphate 2-epimerase from Listeria welshimeri serovar 6b (strain ATCC 35897 / DSM 20650 / CCUG 15529 / CIP 8149 / NCTC 11857 / SLCC 5334 / V8).